Reading from the N-terminus, the 278-residue chain is Putative pyruvate, phosphate dikinase regulatory protein (278 aa).

ADP is bound at residue 149–156; the sequence is GVSRSSKT.

The protein belongs to the pyruvate, phosphate/water dikinase regulatory protein family. PDRP subfamily.

It carries out the reaction N(tele)-phospho-L-histidyl/L-threonyl-[pyruvate, phosphate dikinase] + ADP = N(tele)-phospho-L-histidyl/O-phospho-L-threonyl-[pyruvate, phosphate dikinase] + AMP + H(+). It catalyses the reaction N(tele)-phospho-L-histidyl/O-phospho-L-threonyl-[pyruvate, phosphate dikinase] + phosphate + H(+) = N(tele)-phospho-L-histidyl/L-threonyl-[pyruvate, phosphate dikinase] + diphosphate. Functionally, bifunctional serine/threonine kinase and phosphorylase involved in the regulation of the pyruvate, phosphate dikinase (PPDK) by catalyzing its phosphorylation/dephosphorylation. The chain is Putative pyruvate, phosphate dikinase regulatory protein from Erythrobacter litoralis (strain HTCC2594).